A 90-amino-acid polypeptide reads, in one-letter code: Molybdopterin synthase sulfur carrier subunit (90 aa).

The residue at position 90 (G90) is a 1-thioglycine; alternate. At G90 the chain carries Glycyl adenylate; alternate.

It belongs to the MoaD family. MOCS2A subfamily. Heterotetramer; composed of 2 small (Mocs2A) and 2 large (Mocs2B) subunits. Post-translationally, C-terminal thiocarboxylation occurs in 2 steps, it is first acyl-adenylated (-COAMP) via the hesA/moeB/thiF part of MOCS3, then thiocarboxylated (-COSH) via the rhodanese domain of MOCS3.

Its subcellular location is the cytoplasm. Its pathway is cofactor biosynthesis; molybdopterin biosynthesis. Its function is as follows. Acts as a sulfur carrier required for molybdopterin biosynthesis. Component of the molybdopterin synthase complex that catalyzes the conversion of precursor Z into molybdopterin by mediating the incorporation of 2 sulfur atoms into precursor Z to generate a dithiolene group. In the complex, serves as sulfur donor by being thiocarboxylated (-COSH) at its C-terminus by MOCS3. After interaction with Mocs2B, the sulfur is then transferred to precursor Z to form molybdopterin. Involved during biosynthesis of the molybdenum cofactor. This chain is Molybdopterin synthase sulfur carrier subunit, found in Drosophila melanogaster (Fruit fly).